A 444-amino-acid polypeptide reads, in one-letter code: Exodeoxyribonuclease 7 large subunit (444 aa).

This sequence belongs to the XseA family. As to quaternary structure, heterooligomer composed of large and small subunits.

The protein resides in the cytoplasm. It catalyses the reaction Exonucleolytic cleavage in either 5'- to 3'- or 3'- to 5'-direction to yield nucleoside 5'-phosphates.. In terms of biological role, bidirectionally degrades single-stranded DNA into large acid-insoluble oligonucleotides, which are then degraded further into small acid-soluble oligonucleotides. The polypeptide is Exodeoxyribonuclease 7 large subunit (Rickettsia canadensis (strain McKiel)).